Reading from the N-terminus, the 170-residue chain is Small ribosomal subunit protein uS5 (170 aa).

Residues 11 to 74 (ILEKLVHINR…ETARRVLIHV (64 aa)) enclose the S5 DRBM domain.

It belongs to the universal ribosomal protein uS5 family. In terms of assembly, part of the 30S ribosomal subunit. Contacts proteins S4 and S8.

With S4 and S12 plays an important role in translational accuracy. In terms of biological role, located at the back of the 30S subunit body where it stabilizes the conformation of the head with respect to the body. This Pelagibacter ubique (strain HTCC1062) protein is Small ribosomal subunit protein uS5.